The primary structure comprises 3390 residues: Genome polyprotein (3390 aa).

The interaction with host EXOC1 stretch occupies residues 1-15 (MNNQRKKTGKPSINM). Residues 1-100 (MNNQRKKTGK…MLSIINKRKK (100 aa)) lie on the Cytoplasmic side of the membrane. Positions 37-72 (LLNGQGPMKLVMAFIAFLRFLAIPPTAGVLARWGTF) are hydrophobic; homodimerization of capsid protein C. A propeptide spans 101–114 (TSLCLMMIMPAALA) (ER anchor for the capsid protein C, removed in mature form by serine protease NS3). The chain crosses the membrane as a helical span at residues 101-120 (TSLCLMMIMPAALAFHLTSR). Over 121–243 (DGEPRMIVGK…VEKVETWALR (123 aa)) the chain is Extracellular. Asparagine 183 carries an N-linked (GlcNAc...) asparagine; by host glycan. The helical transmembrane segment at 244–264 (HPGFTILALFLAHYIGTSLTQ) threads the bilayer. Position 265 (lysine 265) is a topological domain, cytoplasmic. A helical transmembrane segment spans residues 266–280 (VVIFILLMLVTPSMT). The Extracellular segment spans residues 281-723 (MRCVGVGNRD…VHQIFGSAYT (443 aa)). Disulfide bonds link cysteine 283/cysteine 310, cysteine 340/cysteine 401, cysteine 354/cysteine 385, and cysteine 372/cysteine 396. Asparagine 347 carries N-linked (GlcNAc...) asparagine; by host glycosylation. Residues 378-391 (DRGWGNGCGLFGKG) form a fusion peptide region. An N-linked (GlcNAc...) asparagine; by host glycan is attached at asparagine 433. 2 disulfides stabilise this stretch: cysteine 463/cysteine 563 and cysteine 580/cysteine 611. The helical transmembrane segment at 724–744 (ALFSGVSWVMKIGIGVLLTWI) threads the bilayer. Over 745 to 750 (GLNSKN) the chain is Cytoplasmic. Residues 751–771 (TSMSFSCIAIGIITLYLGAVV) form a helical membrane-spanning segment. The Extracellular portion of the chain corresponds to 772–1193 (QADMGCVINW…MIGSNASDRM (422 aa)). Disulfide bonds link cysteine 777–cysteine 788, cysteine 828–cysteine 916, cysteine 952–cysteine 996, cysteine 1053–cysteine 1102, cysteine 1064–cysteine 1086, and cysteine 1085–cysteine 1089. Asparagine 903 and asparagine 980 each carry an N-linked (GlcNAc...) asparagine; by host glycan. Asparagine 1132 and asparagine 1188 each carry an N-linked (GlcNAc...) asparagine; by host glycan. A helical membrane pass occupies residues 1194-1218 (GMGVTYLALIATFKIQPFLALGFFL). Over 1219-1224 (RKLTSR) the chain is Cytoplasmic. A helical transmembrane segment spans residues 1225–1243 (ENLLLGVGLAMATTLQLPE). Topologically, residues 1244–1267 (DIEQMANGIALGLMALKLITQFET) are lumenal. A helical membrane pass occupies residues 1268–1288 (YQLWTALISLTCSNTMFTLTV). A topological domain (cytoplasmic) is located at residue alanine 1289. Residues 1290-1308 (WRTATLILAGVSLLPVCQS) traverse the membrane as a helical segment. Residues 1309 to 1315 (SSMRKTD) are Lumenal-facing. A helical membrane pass occupies residues 1316–1336 (WLPMAVAAMGVPPLPLFIFSL). The Cytoplasmic segment spans residues 1337–1344 (KDTLKRRS). The helical transmembrane segment at 1345–1365 (WPLNEGVMAVGLVSILASSLL) threads the bilayer. Residues 1366-1368 (RND) lie on the Lumenal side of the membrane. Residues 1369 to 1389 (VPMAGPLVAGGLLIACYVITG) traverse the membrane as a helical segment. The Cytoplasmic segment spans residues 1390–1443 (TSADLTVEKAADITWEEEAEQTGVSHNLMITVDDDGTMRIKDDETENILTVLLK). An interacts with and activates NS3 protease region spans residues 1396–1435 (VEKAADITWEEEAEQTGVSHNLMITVDDDGTMRIKDDETE). Residues 1444–1464 (TALLIVSGVFPYSIPATLLVW) constitute an intramembrane region (helical). Over 1465–2146 (HTWQKQTQRS…VEELPETMET (682 aa)) the chain is Cytoplasmic. In terms of domain architecture, Peptidase S7 spans 1474 to 1651 (SGVLWDVPSP…NAEPDGPTPE (178 aa)). Residues histidine 1524, aspartate 1548, and serine 1608 each act as charge relay system; for serine protease NS3 activity in the active site. The region spanning 1654-1810 (EEMFKKRNLT…QSNAPIQDEE (157 aa)) is the Helicase ATP-binding domain. The interval 1658-1661 (KKRN) is important for RNA-binding. 1667-1674 (LHPGSGKT) lines the ATP pocket. The short motif at 1758 to 1761 (DEAH) is the DEAH box element. The Helicase C-terminal domain maps to 1820 to 1986 (SGNEWITDFA…GIIPALFEPE (167 aa)). At lysine 1862 the chain carries N6-acetyllysine; by host. The chain crosses the membrane as a helical span at residues 2147–2167 (LLLLGLMILLTGGAMLFLISG). At 2168 to 2169 (KG) the chain is on the lumenal side. The segment at residues 2170–2190 (IGKTSIGLICVIASSGMLWMA) is an intramembrane region (helical). Residue glutamate 2191 is a topological domain, lumenal. A helical transmembrane segment spans residues 2192–2212 (IPLQWIASAIVLEFFMMVLLI). At 2213–2227 (PEPEKQRTPQDNQLA) the chain is on the cytoplasmic side. The chain crosses the membrane as a helical span at residues 2228-2248 (YVVIGILTLAAIIAANEMGLL). The Lumenal portion of the chain corresponds to 2249-2273 (ETTKRDLGMSKEPGVVSPTSYLDVD). An intramembrane region (helical) is located at residues 2274-2294 (LHPASAWTLYAVATTVITPML). At 2295 to 2305 (RHTIENSTANV) the chain is on the lumenal side. 2 N-linked (GlcNAc...) asparagine; by host glycosylation sites follow: asparagine 2300 and asparagine 2304. An intramembrane region (helical) is located at residues 2306-2326 (SLAAIANQAVVLMGLDKGWPI). At 2327-2346 (SKMDLGVPLLALGCYSQVNP) the chain is on the lumenal side. The chain crosses the membrane as a helical span at residues 2347 to 2367 (LTLTAAVLLLITHYAIIGPGL). At 2368 to 2412 (QAKATREAQKRTAAGIMKNPTVDGIMTIDLDPVIYDSKFEKQLGQ) the chain is on the cytoplasmic side. Residues 2413–2433 (VMLLVLCAVQLLLMRTSWALC) form a helical membrane-spanning segment. Over 2434–2458 (EALTLATGPITTLWEGSPGKFWNTT) the chain is Lumenal. A glycan (N-linked (GlcNAc...) asparagine; by host) is linked at asparagine 2456. Residues 2459 to 2479 (IAVSMANIFRGSYLAGAGLAF) form a helical membrane-spanning segment. Residues 2480 to 3390 (SIMKSVGTGK…KEEESEGAIW (911 aa)) lie on the Cytoplasmic side of the membrane. One can recognise an mRNA cap 0-1 NS5-type MT domain in the interval 2492–2753 (TGSQGETLGE…DVDLGAGTRH (262 aa)). An S-adenosyl-L-methionine-binding site is contributed by serine 2546. Serine 2546 is subject to Phosphoserine. Residue lysine 2551 is the For 2'-O-MTase activity of the active site. Residues 2567-2570 (VIDL) carry the SUMO-interacting motif motif. Positions 2576, 2577, 2594, 2595, 2621, and 2622 each coordinate S-adenosyl-L-methionine. The For 2'-O-MTase activity role is filled by aspartate 2636. Residue isoleucine 2637 coordinates S-adenosyl-L-methionine. Residues lysine 2670 and glutamate 2706 each act as for 2'-O-MTase activity in the active site. Tyrosine 2708 contributes to the S-adenosyl-L-methionine binding site. Positions 2927, 2931, 2936, and 2939 each coordinate Zn(2+). The RdRp catalytic domain occupies 3018–3168 (AMYADDTAGW…PIDDRFANAL (151 aa)). Histidine 3202, cysteine 3218, and cysteine 3337 together coordinate Zn(2+).

In the N-terminal section; belongs to the class I-like SAM-binding methyltransferase superfamily. mRNA cap 0-1 NS5-type methyltransferase family. Homodimer. Interacts (via N-terminus) with host EXOC1 (via C-terminus); this interaction results in EXOC1 degradation through the proteasome degradation pathway. As to quaternary structure, forms heterodimers with envelope protein E in the endoplasmic reticulum and Golgi. In terms of assembly, homodimer; in the endoplasmic reticulum and Golgi. Interacts with protein prM. Interacts with non-structural protein 1. Homodimer; Homohexamer when secreted. Interacts with envelope protein E. As to quaternary structure, interacts (via N-terminus) with serine protease NS3. In terms of assembly, forms a heterodimer with serine protease NS3. May form homooligomers. Forms a heterodimer with NS2B. Interacts with NS4B. Interacts with unphosphorylated RNA-directed RNA polymerase NS5; this interaction stimulates RNA-directed RNA polymerase NS5 guanylyltransferase activity. As to quaternary structure, interacts with host MAVS; this interaction inhibits the synthesis of IFN-beta. Interacts with host AUP1; the interaction occurs in the presence of Dengue virus NS4B and induces lipophagy which facilitates production of virus progeny particles. In terms of assembly, interacts with serine protease NS3. Homodimer. Interacts with host STAT2; this interaction inhibits the phosphorylation of the latter, and, when all viral proteins are present (polyprotein), targets STAT2 for degradation. Interacts with serine protease NS3. In terms of processing, specific enzymatic cleavages in vivo yield mature proteins. Cleavages in the lumen of endoplasmic reticulum are performed by host signal peptidase, whereas cleavages in the cytoplasmic side are performed by serine protease NS3. Signal cleavage at the 2K-4B site requires a prior NS3 protease-mediated cleavage at the 4A-2K site. Cleaved in post-Golgi vesicles by a host furin, releasing the mature small envelope protein M, and peptide pr. This cleavage is incomplete as up to 30% of viral particles still carry uncleaved prM. Post-translationally, N-glycosylated. In terms of processing, N-glycosylated. The excreted form is glycosylated and this is required for efficient secretion of the protein from infected cells. Acetylated by host KAT5. Acetylation modulates NS3 RNA-binding and unwinding activities and plays an important positive role for viral replication. Post-translationally, sumoylation of RNA-directed RNA polymerase NS5 increases NS5 protein stability allowing proper viral RNA replication. In terms of processing, phosphorylated on serines residues. This phosphorylation may trigger NS5 nuclear localization.

The protein localises to the virion. It localises to the host nucleus. It is found in the host cytoplasm. Its subcellular location is the host perinuclear region. The protein resides in the secreted. The protein localises to the virion membrane. It localises to the host endoplasmic reticulum membrane. It is found in the host mitochondrion. The catalysed reaction is Selective hydrolysis of -Xaa-Xaa-|-Yaa- bonds in which each of the Xaa can be either Arg or Lys and Yaa can be either Ser or Ala.. It catalyses the reaction RNA(n) + a ribonucleoside 5'-triphosphate = RNA(n+1) + diphosphate. It carries out the reaction a ribonucleoside 5'-triphosphate + H2O = a ribonucleoside 5'-diphosphate + phosphate + H(+). The enzyme catalyses ATP + H2O = ADP + phosphate + H(+). The catalysed reaction is a 5'-end (5'-triphosphoguanosine)-ribonucleoside in mRNA + S-adenosyl-L-methionine = a 5'-end (N(7)-methyl 5'-triphosphoguanosine)-ribonucleoside in mRNA + S-adenosyl-L-homocysteine. It catalyses the reaction a 5'-end (N(7)-methyl 5'-triphosphoguanosine)-ribonucleoside in mRNA + S-adenosyl-L-methionine = a 5'-end (N(7)-methyl 5'-triphosphoguanosine)-(2'-O-methyl-ribonucleoside) in mRNA + S-adenosyl-L-homocysteine + H(+). In terms of biological role, plays a role in virus budding by binding to the cell membrane and gathering the viral RNA into a nucleocapsid that forms the core of a mature virus particle. During virus entry, may induce genome penetration into the host cytoplasm after hemifusion induced by the surface proteins. Can migrate to the cell nucleus where it modulates host functions. Overcomes the anti-viral effects of host EXOC1 by sequestering and degrading the latter through the proteasome degradation pathway. Its function is as follows. Inhibits RNA silencing by interfering with host Dicer. Prevents premature fusion activity of envelope proteins in trans-Golgi by binding to envelope protein E at pH6.0. After virion release in extracellular space, gets dissociated from E dimers. Functionally, acts as a chaperone for envelope protein E during intracellular virion assembly by masking and inactivating envelope protein E fusion peptide. prM is the only viral peptide matured by host furin in the trans-Golgi network probably to avoid catastrophic activation of the viral fusion activity in acidic Golgi compartment prior to virion release. prM-E cleavage is inefficient, and many virions are only partially matured. These uncleaved prM would play a role in immune evasion. In terms of biological role, may play a role in virus budding. Exerts cytotoxic effects by activating a mitochondrial apoptotic pathway through M ectodomain. May display a viroporin activity. Its function is as follows. Binds to host cell surface receptor and mediates fusion between viral and cellular membranes. Envelope protein is synthesized in the endoplasmic reticulum in the form of heterodimer with protein prM. They play a role in virion budding in the ER, and the newly formed immature particle is covered with 60 spikes composed of heterodimer between precursor prM and envelope protein E. The virion is transported to the Golgi apparatus where the low pH causes dissociation of PrM-E heterodimers and formation of E homodimers. prM-E cleavage is inefficient, and many virions are only partially matured. These uncleaved prM would play a role in immune evasion. Involved in immune evasion, pathogenesis and viral replication. Once cleaved off the polyprotein, is targeted to three destinations: the viral replication cycle, the plasma membrane and the extracellular compartment. Essential for viral replication. Required for formation of the replication complex and recruitment of other non-structural proteins to the ER-derived membrane structures. Excreted as a hexameric lipoparticle that plays a role against host immune response. Antagonizing the complement function. Binds to the host macrophages and dendritic cells. Inhibits signal transduction originating from Toll-like receptor 3 (TLR3). Functionally, disrupts the host endothelial glycocalyx layer of host pulmonary microvascular endothelial cells, inducing degradation of sialic acid and shedding of heparan sulfate proteoglycans. NS1 induces expression of sialidases, heparanase, and activates cathepsin L, which activates heparanase via enzymatic cleavage. These effects are probably linked to the endothelial hyperpermeability observed in severe dengue disease. In terms of biological role, component of the viral RNA replication complex that functions in virion assembly and antagonizes the host immune response. Its function is as follows. Required cofactor for the serine protease function of NS3. May have membrane-destabilizing activity and form viroporins. Displays three enzymatic activities: serine protease, NTPase and RNA helicase. NS3 serine protease, in association with NS2B, performs its autocleavage and cleaves the polyprotein at dibasic sites in the cytoplasm: C-prM, NS2A-NS2B, NS2B-NS3, NS3-NS4A, NS4A-2K and NS4B-NS5. NS3 RNA helicase binds RNA and unwinds dsRNA in the 3' to 5' direction. Functionally, regulates the ATPase activity of the NS3 helicase activity. NS4A allows NS3 helicase to conserve energy during unwinding. Plays a role in the inhibition of the host innate immune response. Interacts with host MAVS and thereby prevents the interaction between RIGI and MAVS. In turn, IFN-beta production is impaired. Interacts with host AUP1 which mediates induction of lipophagy in host cells and facilitates production of virus progeny particles. In terms of biological role, functions as a signal peptide for NS4B and is required for the interferon antagonism activity of the latter. Its function is as follows. Induces the formation of ER-derived membrane vesicles where the viral replication takes place. Inhibits interferon (IFN)-induced host STAT1 phosphorylation and nuclear translocation, thereby preventing the establishment of cellular antiviral state by blocking the IFN-alpha/beta pathway. Replicates the viral (+) and (-) RNA genome, and performs the capping of genomes in the cytoplasm. NS5 methylates viral RNA cap at guanine N-7 and ribose 2'-O positions. Besides its role in RNA genome replication, also prevents the establishment of cellular antiviral state by blocking the interferon-alpha/beta (IFN-alpha/beta) signaling pathway. Inhibits host TYK2 and STAT2 phosphorylation, thereby preventing activation of JAK-STAT signaling pathway. The chain is Genome polyprotein (pol) from Dengue virus type 3 (strain Martinique/1243/1999) (DENV-3).